A 144-amino-acid chain; its full sequence is MAGVSVKDVDAQKFITAYAAFLKRSGKMTTPQWIDIVKTGTHKELAPYDPDWYYVRAAAIARHIYLRKQVGVGRLCKVYGGSVNRGMRPSHHRDGSGSVQRKVVQSLEKIGVLEKSDNGGRRISQQGQRDLDRIAYSLLEEESE.

The segment at 83–102 (VNRGMRPSHHRDGSGSVQRK) is disordered.

The protein belongs to the eukaryotic ribosomal protein eS19 family. In terms of assembly, component of the small ribosomal subunit (SSU). Mature yeast ribosomes consist of a small (40S) and a large (60S) subunit. The 40S small subunit contains 1 molecule of ribosomal RNA (18S rRNA) and at least 33 different proteins. The large 60S subunit contains 3 rRNA molecules (25S, 5.8S and 5S rRNA) and at least 46 different proteins.

It is found in the cytoplasm. Its subcellular location is the nucleus. The protein localises to the nucleolus. Its function is as follows. Component of the ribosome, a large ribonucleoprotein complex responsible for the synthesis of proteins in the cell. The small ribosomal subunit (SSU) binds messenger RNAs (mRNAs) and translates the encoded message by selecting cognate aminoacyl-transfer RNA (tRNA) molecules. The large subunit (LSU) contains the ribosomal catalytic site termed the peptidyl transferase center (PTC), which catalyzes the formation of peptide bonds, thereby polymerizing the amino acids delivered by tRNAs into a polypeptide chain. The nascent polypeptides leave the ribosome through a tunnel in the LSU and interact with protein factors that function in enzymatic processing, targeting, and the membrane insertion of nascent chains at the exit of the ribosomal tunnel. eS19 is required for proper maturation of the small (40S) ribosomal subunit. Binds to 40S pre-ribosomal particles, probably required after association of NOC4 but before association of ENP1, TSR1 and RIO2 with 20/21S pre-rRNA. This is Small ribosomal subunit protein eS19A (rps1901) from Schizosaccharomyces pombe (strain 972 / ATCC 24843) (Fission yeast).